Here is a 198-residue protein sequence, read N- to C-terminus: Probable GTP-binding protein EngB (198 aa).

Positions 27 to 198 (DLPEVALAGR…ESWDTILSEL (172 aa)) constitute an EngB-type G domain. Residues 35-42 (GRSNVGKS), 62-66 (GKTQL), 80-83 (DVPG), 147-150 (TKAD), and 179-181 (FSS) contribute to the GTP site. Residues serine 42 and threonine 64 each contribute to the Mg(2+) site.

The protein belongs to the TRAFAC class TrmE-Era-EngA-EngB-Septin-like GTPase superfamily. EngB GTPase family. The cofactor is Mg(2+).

In terms of biological role, necessary for normal cell division and for the maintenance of normal septation. The protein is Probable GTP-binding protein EngB of Streptococcus agalactiae serotype Ia (strain ATCC 27591 / A909 / CDC SS700).